A 295-amino-acid chain; its full sequence is MVTIDMRNDATLMESRRKKQAWRRQKNRIALVLSMATMLFGLFWLIWILFSTVTKGIDGMSLALFTEMTPPPNTAGGGLANAIAGSGLLILWATVIGTPLGIMAGIYLAEYGRKSWLAEVTRFINDILLSAPSIVVGLFVYTIVVAKMEHFSGWAGVIALALLQVPIVIRTTENMLKLVPDSLREAAYALGTPKWRMISAITLKASVSGILTGILLAIARIAGETAPLLFTSLSNQFWSTDLTRPIANLPVTIFKFAMSPFAEWQNLAWAGVLLITLCVLLLNILARVIFAKKKH.

6 helical membrane passes run 29–49 (IALV…IWIL), 88–108 (LLIL…GIYL), 126–146 (DILL…IVVA), 149–169 (EHFS…PIVI), 198–218 (ISAI…LLAI), and 266–286 (NLAW…NILA). Residues 83 to 286 (IAGSGLLILW…LCVLLLNILA (204 aa)) form the ABC transmembrane type-1 domain.

The protein belongs to the binding-protein-dependent transport system permease family. CysTW subfamily.

The protein localises to the cell inner membrane. Part of a binding-protein-dependent transport system for phosphate; probably responsible for the translocation of the substrate across the membrane. This chain is Phosphate transport system permease protein PstA (pstA), found in Yersinia pestis.